The chain runs to 324 residues: Putative transcription factor sel-7 (324 aa).

Polar residues predominate over residues 67-85 (SPPQTVISEAPPQSFTPSA). The segment at 67 to 151 (SPPQTVISEA…DEKVLADGPF (85 aa)) is disordered. Residues 86–98 (TNSTSDKTSSSLK) are compositionally biased toward low complexity. Over residues 106–123 (SDGDLDMEGEEDTEELFD) the composition is skewed to acidic residues. Polar residues predominate over residues 124 to 133 (NESQPSQRNQ). Over residues 134–146 (SPKETEVEDEKVL) the composition is skewed to basic and acidic residues.

As to quaternary structure, multimer. May interact with mediator complex subunit mdt-29. As to expression, widely expressed, including in pharyngeal muscle cells and body wall muscle cells.

The protein resides in the nucleus. Its function is as follows. Putative transcription factor. Positive regulator of the lin-12/Notch signaling pathway. Binds to specific DNA sequences in regulatory elements. Involved in cell fate decisions that require cell-cell interactions, such as the anchor cell (AC) / ventral uterine (VU) precursor cell fate decision. Heterochronic protein which controls the choice of stage specific cell fates, including the larval L3 stage-specific fate of seam cells. Involved in regulating the temporal expression pattern of hunchback-like protein hbl-1, thereby playing a role in the progression between larval stages L2 and L3. The chain is Putative transcription factor sel-7 from Caenorhabditis elegans.